Reading from the N-terminus, the 857-residue chain is Bifunctional uridylyltransferase/uridylyl-removing enzyme (857 aa).

Positions 1 to 322 (MDTTPELLLC…FPSESMVTRE (322 aa)) are uridylyltransferase. Residues 323-679 (INDRFVERQG…ARISPAGEGL (357 aa)) form a uridylyl-removing region. An HD domain is found at 441–563 (VDQHILMVVR…VGNGRYLTAL (123 aa)). ACT domains are found at residues 680 to 760 (QVAV…DPTQ) and 788 to 857 (LLSV…ALAI).

It belongs to the GlnD family. The cofactor is Mg(2+).

The enzyme catalyses [protein-PII]-L-tyrosine + UTP = [protein-PII]-uridylyl-L-tyrosine + diphosphate. It catalyses the reaction [protein-PII]-uridylyl-L-tyrosine + H2O = [protein-PII]-L-tyrosine + UMP + H(+). Its activity is regulated as follows. Uridylyltransferase (UTase) activity is inhibited by glutamine, while glutamine activates uridylyl-removing (UR) activity. Modifies, by uridylylation and deuridylylation, the PII regulatory proteins (GlnB and homologs), in response to the nitrogen status of the cell that GlnD senses through the glutamine level. Under low glutamine levels, catalyzes the conversion of the PII proteins and UTP to PII-UMP and PPi, while under higher glutamine levels, GlnD hydrolyzes PII-UMP to PII and UMP (deuridylylation). Thus, controls uridylylation state and activity of the PII proteins, and plays an important role in the regulation of nitrogen assimilation and metabolism. This Cupriavidus metallidurans (strain ATCC 43123 / DSM 2839 / NBRC 102507 / CH34) (Ralstonia metallidurans) protein is Bifunctional uridylyltransferase/uridylyl-removing enzyme.